The chain runs to 55 residues: ATP synthase F(0) complex subunit 8 (55 aa).

A helical transmembrane segment spans residues 10 to 32 (FFIMLASWLTFSLIIQPKLLTFV).

It belongs to the ATPase protein 8 family. Component of the ATP synthase complex composed at least of ATP5F1A/subunit alpha, ATP5F1B/subunit beta, ATP5MC1/subunit c (homooctomer), MT-ATP6/subunit a, MT-ATP8/subunit 8, ATP5ME/subunit e, ATP5MF/subunit f, ATP5MG/subunit g, ATP5MK/subunit k, ATP5MJ/subunit j, ATP5F1C/subunit gamma, ATP5F1D/subunit delta, ATP5F1E/subunit epsilon, ATP5PF/subunit F6, ATP5PB/subunit b, ATP5PD/subunit d, ATP5PO/subunit OSCP. ATP synthase complex consists of a soluble F(1) head domain (subunits alpha(3) and beta(3)) - the catalytic core - and a membrane F(0) domain - the membrane proton channel (subunits c, a, 8, e, f, g, k and j). These two domains are linked by a central stalk (subunits gamma, delta, and epsilon) rotating inside the F1 region and a stationary peripheral stalk (subunits F6, b, d, and OSCP).

Its subcellular location is the mitochondrion membrane. Its function is as follows. Subunit 8, of the mitochondrial membrane ATP synthase complex (F(1)F(0) ATP synthase or Complex V) that produces ATP from ADP in the presence of a proton gradient across the membrane which is generated by electron transport complexes of the respiratory chain. ATP synthase complex consist of a soluble F(1) head domain - the catalytic core - and a membrane F(1) domain - the membrane proton channel. These two domains are linked by a central stalk rotating inside the F(1) region and a stationary peripheral stalk. During catalysis, ATP synthesis in the catalytic domain of F(1) is coupled via a rotary mechanism of the central stalk subunits to proton translocation. In vivo, can only synthesize ATP although its ATP hydrolase activity can be activated artificially in vitro. Part of the complex F(0) domain. The sequence is that of ATP synthase F(0) complex subunit 8 from Loxigilla noctis (Lesser Antillean bullfinch).